A 718-amino-acid polypeptide reads, in one-letter code: Catalase-peroxidase 1 (718 aa).

The tryptophyl-tyrosyl-methioninium (Trp-Tyr) (with M-247) cross-link spans 93 to 221 (WHSAGTYRIA…LAAVMMGLIY (129 aa)). Residue H94 is the Proton acceptor of the active site. The segment at residues 221–247 (YVNPEGVDGNPDPLKTAQDMRVTFARM) is a cross-link (tryptophyl-tyrosyl-methioninium (Tyr-Met) (with W-93)). H262 provides a ligand contact to heme b.

The protein belongs to the peroxidase family. Peroxidase/catalase subfamily. As to quaternary structure, homodimer or homotetramer. Requires heme b as cofactor. Post-translationally, formation of the three residue Trp-Tyr-Met cross-link is important for the catalase, but not the peroxidase activity of the enzyme.

The enzyme catalyses H2O2 + AH2 = A + 2 H2O. The catalysed reaction is 2 H2O2 = O2 + 2 H2O. Its function is as follows. Bifunctional enzyme with both catalase and broad-spectrum peroxidase activity. In Shewanella amazonensis (strain ATCC BAA-1098 / SB2B), this protein is Catalase-peroxidase 1.